Consider the following 196-residue polypeptide: Peptidyl-tRNA hydrolase (196 aa).

A tRNA-binding site is contributed by Tyr-16. His-21 (proton acceptor) is an active-site residue. TRNA contacts are provided by Phe-67, Asn-69, and Asn-115.

Belongs to the PTH family. As to quaternary structure, monomer.

It localises to the cytoplasm. It catalyses the reaction an N-acyl-L-alpha-aminoacyl-tRNA + H2O = an N-acyl-L-amino acid + a tRNA + H(+). Its function is as follows. Hydrolyzes ribosome-free peptidyl-tRNAs (with 1 or more amino acids incorporated), which drop off the ribosome during protein synthesis, or as a result of ribosome stalling. Catalyzes the release of premature peptidyl moieties from peptidyl-tRNA molecules trapped in stalled 50S ribosomal subunits, and thus maintains levels of free tRNAs and 50S ribosomes. The chain is Peptidyl-tRNA hydrolase from Edwardsiella ictaluri (strain 93-146).